Here is a 377-residue protein sequence, read N- to C-terminus: Gastricsin (377 aa).

A signal peptide spans 1–5 (QLLEA). 2 consecutive propeptides (activation peptide) follow at residues 6-31 (AVVK…LGEF) and 32-48 (LRTH…FGDL). The Peptidase A1 domain occupies 62–374 (YFGEISIGTP…DLSNNRVGFA (313 aa)). Asp-80 is an active-site residue. Disulfide bonds link Cys-93–Cys-98 and Cys-256–Cys-260. The active site involves Asp-265. A disulfide bridge links Cys-299 with Cys-332.

Belongs to the peptidase A1 family. Each pepsinogen is converted to corresponding pepsin at pH 2.0 in part as a result of the release of a 47 AA activation segment and in part as a result of stepwise proteolytic cleavage via an intermediate form(s).

It localises to the secreted. It carries out the reaction More restricted specificity than pepsin A, but shows preferential cleavage at Tyr-|-Xaa bonds. High activity on hemoglobin.. In terms of biological role, hydrolyzes a variety of proteins. In Macaca fuscata fuscata (Japanese macaque), this protein is Gastricsin (PGC).